The primary structure comprises 250 residues: tRNA (guanine-N(1)-)-methyltransferase (250 aa).

S-adenosyl-L-methionine-binding positions include G116 and 136 to 141 (IGDYVL).

The protein belongs to the RNA methyltransferase TrmD family. Homodimer.

It is found in the cytoplasm. It catalyses the reaction guanosine(37) in tRNA + S-adenosyl-L-methionine = N(1)-methylguanosine(37) in tRNA + S-adenosyl-L-homocysteine + H(+). Specifically methylates guanosine-37 in various tRNAs. The protein is tRNA (guanine-N(1)-)-methyltransferase of Pseudomonas putida (strain ATCC 47054 / DSM 6125 / CFBP 8728 / NCIMB 11950 / KT2440).